Consider the following 298-residue polypeptide: Sulfate adenylyltransferase subunit 2 (298 aa).

2 stretches are compositionally biased toward basic and acidic residues: residues 272–282 (RTSERQGRLID) and 289–298 (MEKKKQEGYF). Residues 272–298 (RTSERQGRLIDSDSAGSMEKKKQEGYF) are disordered.

Belongs to the PAPS reductase family. CysD subfamily. As to quaternary structure, heterodimer composed of CysD, the smaller subunit, and CysN.

It catalyses the reaction sulfate + ATP + H(+) = adenosine 5'-phosphosulfate + diphosphate. It functions in the pathway sulfur metabolism; hydrogen sulfide biosynthesis; sulfite from sulfate: step 1/3. In terms of biological role, with CysN forms the ATP sulfurylase (ATPS) that catalyzes the adenylation of sulfate producing adenosine 5'-phosphosulfate (APS) and diphosphate, the first enzymatic step in sulfur assimilation pathway. APS synthesis involves the formation of a high-energy phosphoric-sulfuric acid anhydride bond driven by GTP hydrolysis by CysN coupled to ATP hydrolysis by CysD. This chain is Sulfate adenylyltransferase subunit 2, found in Burkholderia lata (strain ATCC 17760 / DSM 23089 / LMG 22485 / NCIMB 9086 / R18194 / 383).